Here is a 1274-residue protein sequence, read N- to C-terminus: Mediator of RNA polymerase II transcription subunit 14 (1274 aa).

Disordered stretches follow at residues 1 to 40 (MENG…KAHA), 1056 to 1142 (LVGT…LHTQ), and 1155 to 1274 (AQRQ…VVID). A compositionally biased stretch (basic and acidic residues) spans 27 to 37 (AKREGSPDKGK). Over residues 1075–1085 (QDLQQGPQKTP) the composition is skewed to polar residues. A compositionally biased stretch (low complexity) spans 1090-1104 (AAQAAQAAQAAQAAQ). The span at 1108–1119 (PQRPKQQPPTPS) shows a compositional bias: pro residues. Composition is skewed to low complexity over residues 1120 to 1142 (QPQQ…LHTQ), 1155 to 1172 (AQRQ…NNNT), and 1183 to 1252 (PQQR…PQGQ). A compositionally biased stretch (gly residues) spans 1253 to 1265 (PGHGGGANGGMGG).

It belongs to the Mediator complex subunit 14 family. As to quaternary structure, component of the Mediator complex.

It localises to the nucleus. Functionally, component of the Mediator complex, a coactivator involved in the regulated transcription of nearly all RNA polymerase II-dependent genes. Mediator functions as a bridge to convey information from gene-specific regulatory proteins to the basal RNA polymerase II transcription machinery. Mediator is recruited to promoters by direct interactions with regulatory proteins and serves as a scaffold for the assembly of a functional preinitiation complex with RNA polymerase II and the general transcription factors. The chain is Mediator of RNA polymerase II transcription subunit 14 (rgr1) from Neurospora crassa (strain ATCC 24698 / 74-OR23-1A / CBS 708.71 / DSM 1257 / FGSC 987).